We begin with the raw amino-acid sequence, 42 residues long: Large ribosomal subunit protein bL36 (42 aa).

The protein belongs to the bacterial ribosomal protein bL36 family.

The sequence is that of Large ribosomal subunit protein bL36 from Wolbachia sp. subsp. Brugia malayi (strain TRS).